A 369-amino-acid polypeptide reads, in one-letter code: Histidinol-phosphate aminotransferase 2 (369 aa).

Position 231 is an N6-(pyridoxal phosphate)lysine (K231).

The protein belongs to the class-II pyridoxal-phosphate-dependent aminotransferase family. Histidinol-phosphate aminotransferase subfamily. As to quaternary structure, homodimer. It depends on pyridoxal 5'-phosphate as a cofactor.

The catalysed reaction is L-histidinol phosphate + 2-oxoglutarate = 3-(imidazol-4-yl)-2-oxopropyl phosphate + L-glutamate. The protein operates within amino-acid biosynthesis; L-histidine biosynthesis; L-histidine from 5-phospho-alpha-D-ribose 1-diphosphate: step 7/9. The protein is Histidinol-phosphate aminotransferase 2 of Legionella pneumophila subsp. pneumophila (strain Philadelphia 1 / ATCC 33152 / DSM 7513).